The primary structure comprises 358 residues: Phosphoribosylformylglycinamidine cyclo-ligase (358 aa).

This sequence belongs to the AIR synthase family.

Its subcellular location is the cytoplasm. The enzyme catalyses 2-formamido-N(1)-(5-O-phospho-beta-D-ribosyl)acetamidine + ATP = 5-amino-1-(5-phospho-beta-D-ribosyl)imidazole + ADP + phosphate + H(+). The protein operates within purine metabolism; IMP biosynthesis via de novo pathway; 5-amino-1-(5-phospho-D-ribosyl)imidazole from N(2)-formyl-N(1)-(5-phospho-D-ribosyl)glycinamide: step 2/2. In Nitrosococcus oceani (strain ATCC 19707 / BCRC 17464 / JCM 30415 / NCIMB 11848 / C-107), this protein is Phosphoribosylformylglycinamidine cyclo-ligase.